The following is a 164-amino-acid chain: Peptidyl-prolyl cis-trans isomerase A-like 4D (164 aa).

The 157-residue stretch at 7–163 (FFEITRDGKP…KKITIADCGQ (157 aa)) folds into the PPIase cyclophilin-type domain.

It belongs to the cyclophilin-type PPIase family. PPIase A subfamily.

It localises to the cytoplasm. It carries out the reaction [protein]-peptidylproline (omega=180) = [protein]-peptidylproline (omega=0). Its function is as follows. PPIases accelerate the folding of proteins. It catalyzes the cis-trans isomerization of proline imidic peptide bonds in oligopeptides. This is Peptidyl-prolyl cis-trans isomerase A-like 4D from Homo sapiens (Human).